The chain runs to 574 residues: MAGVQQGEKQLFEKFWRGTFKAVATPRPESIIVASITARRAVTKLETPVGPKDDEEKVKAKDLVTKTHEKNGHIKRRGRKRHSHRRARSVSFDADLSPRPVPKTKKKKKKSQRKRRRHRSPSCSPSPVRKKKKKKSSKKRKRHRSASRKGRHSGSSSRRKRKEDKKHKKRSRSHSHRRHRHRKAEIRSSSCMENRSEDCEKSGFRDGGRSSDVHGGDACRSAVKLTNKISSKCCCHFSESTVSPSRSGVEGLSKVVIVQNSESSDGKRRADYDSGNDTSSPPSSKTGITRSKVAGNGKFSCLTSPEKLRLADGDNASDSGNSLTSYDSLGKPLLRENTLHSSVFSKLKGEESGRFCVDVEKTQPLDLISDRNRSPSHDRYEDGTRSRSRSISSQSRYSGRHSRSRSLSSGRRSYSRSSSYSLASRRDSLSSVSSCRSLNHSRCTTHRFRERKRYCSSCKSRKHSRRRPSSPMRKRRRDSPSHLEARRITSARKRPIPYYRPSPSVSSRSSSILSWRLFPLTRSRTRSRSCSRSRSRSHSHTYSSYRSYSRSSSWNSLYSRRSRSRSRSYSRARR.

Disordered stretches follow at residues 45-217, 257-291, 366-422, 454-508, and 526-574; these read LETP…HGGD, IVQN…ITRS, DLIS…SYSL, YCSS…VSSR, and RSRS…RARR. Positions 51 to 72 are enriched in basic and acidic residues; that stretch reads PKDDEEKVKAKDLVTKTHEKNG. 3 stretches are compositionally biased toward basic residues: residues 73–88, 102–120, and 128–184; these read HIKR…RRAR, PKTK…RHRS, and VRKK…HRKA. Positions 194-217 are enriched in basic and acidic residues; sequence NRSEDCEKSGFRDGGRSSDVHGGD. Polar residues predominate over residues 275–289; sequence GNDTSSPPSSKTGIT. Positions 366-385 are enriched in basic and acidic residues; it reads DLISDRNRSPSHDRYEDGTR. Residues 405–422 show a composition bias toward low complexity; it reads RSLSSGRRSYSRSSSYSL. Residues 454-477 show a composition bias toward basic residues; the sequence is YCSSCKSRKHSRRRPSSPMRKRRR. Residues 478–487 show a composition bias toward basic and acidic residues; the sequence is DSPSHLEARR. Residues 496-508 are compositionally biased toward low complexity; that stretch reads IPYYRPSPSVSSR. The span at 526 to 539 shows a compositional bias: basic residues; it reads RSRSCSRSRSRSHS. The segment covering 540-559 has biased composition (low complexity); the sequence is HTYSSYRSYSRSSSWNSLYS. Residues 560–574 are compositionally biased toward basic residues; the sequence is RRSRSRSRSYSRARR.

The protein belongs to the nSR100 family.

It is found in the nucleus. Splicing factor specifically required for neural cell differentiation. Acts in conjunction with nPTB/PTBP2 by binding directly to its regulated target transcripts and promotes neural-specific exon inclusion in many genes that function in neural cell differentiation. Required to promote the inclusion of neural-specific exon 10 in nPTB/PTBP2, leading to increased expression of neural-specific nPTB/PTBP2. The protein is Serine/arginine repetitive matrix protein 4 (srrm4) of Danio rerio (Zebrafish).